Consider the following 211-residue polypeptide: Large ribosomal subunit protein mL48 (211 aa).

The N-terminal 27 residues, 1 to 27 (MSGTLGKVLGVWTNTVSKQGFSLLRFR), are a transit peptide targeting the mitochondrion. Lys-198 bears the N6-succinyllysine mark.

Belongs to the mitochondrion-specific ribosomal protein mL48 family. In terms of assembly, component of the mitochondrial ribosome large subunit (39S) which comprises a 16S rRNA and about 50 distinct proteins. Interacts with OXA1L.

It is found in the mitochondrion. This Mus musculus (Mouse) protein is Large ribosomal subunit protein mL48 (Mrpl48).